We begin with the raw amino-acid sequence, 218 residues long: Guanylate kinase (218 aa).

Residues 5-188 form the Guanylate kinase-like domain; it reads GNLFILSAPS…ALLDLTTIVN (184 aa). 12-19 is a binding site for ATP; sequence APSGAGKS.

This sequence belongs to the guanylate kinase family.

The protein resides in the cytoplasm. The catalysed reaction is GMP + ATP = GDP + ADP. Essential for recycling GMP and indirectly, cGMP. The protein is Guanylate kinase of Colwellia psychrerythraea (strain 34H / ATCC BAA-681) (Vibrio psychroerythus).